Reading from the N-terminus, the 543-residue chain is Pectate disaccharide-lyase (543 aa).

It belongs to the polysaccharide lyase 2 family. It depends on Cu cation as a cofactor. Requires Mn(2+) as cofactor. Ni(2+) serves as cofactor.

The protein localises to the cytoplasm. The catalysed reaction is [(1-&gt;4)-alpha-D-galacturonosyl](n) = 4-(4-deoxy-alpha-D-galact-4-enuronosyl)-D-galacturonate + [(1-&gt;4)-alpha-D-galacturonosyl](n-2). It participates in glycan metabolism; pectin degradation. Functionally, catalyzes the formation of unsaturated digalacturonates from polygalacturonate or short oligogalacturonates. This chain is Pectate disaccharide-lyase (pelW), found in Dickeya dadantii (strain 3937) (Erwinia chrysanthemi (strain 3937)).